The chain runs to 260 residues: Dolichol-phosphate mannosyltransferase subunit 1 (260 aa).

At Ala2 the chain carries N-acetylalanine. 2 positions are modified to phosphoserine: Ser3 and Ser9. GDP-alpha-D-mannose is bound by residues Pro32, Tyr34, Glu36, Ile63, Asp65, Asp118, Ala119, Asp120, Arg147, Arg234, and Lys240. Asp120 serves as a coordination point for Mg(2+). Asp120 contacts Mn(2+).

This sequence belongs to the glycosyltransferase 2 family. Component of the dolichol-phosphate mannose (DPM) synthase complex composed of DPM1, DPM2 and DPM3; within the complex, directly interacts with DPM3. This interaction stabilizes DPM1. It depends on Mg(2+) as a cofactor. The cofactor is Mn(2+). Ca(2+) serves as cofactor.

The protein localises to the endoplasmic reticulum. The catalysed reaction is a di-trans,poly-cis-dolichyl phosphate + GDP-alpha-D-mannose = a di-trans,poly-cis-dolichyl beta-D-mannosyl phosphate + GDP. It participates in protein modification; protein glycosylation. In terms of biological role, transfers mannose from GDP-mannose to dolichol monophosphate to form dolichol phosphate mannose (Dol-P-Man) which is the mannosyl donor in pathways leading to N-glycosylation, glycosyl phosphatidylinositol membrane anchoring, and O-mannosylation of proteins; catalytic subunit of the dolichol-phosphate mannose (DPM) synthase complex. This chain is Dolichol-phosphate mannosyltransferase subunit 1 (DPM1), found in Homo sapiens (Human).